The sequence spans 678 residues: Penicillin-binding protein activator LpoA (678 aa).

The signal sequence occupies residues 1–26 (MVPSTFSRLKAARCLPVVLAALIFAG). C27 carries the N-palmitoyl cysteine lipid modification. The S-diacylglycerol cysteine moiety is linked to residue C27. 2 disordered regions span residues 302 to 340 (DVAE…PVSA) and 496 to 528 (ALTG…DDQF). Composition is skewed to low complexity over residues 330–340 (QPAAQPVPVSA) and 513–528 (TTNN…DDQF).

This sequence belongs to the LpoA family. Interacts with PBP1a.

It localises to the cell outer membrane. Functionally, regulator of peptidoglycan synthesis that is essential for the function of penicillin-binding protein 1A (PBP1a). This Shigella sonnei (strain Ss046) protein is Penicillin-binding protein activator LpoA.